Here is a 348-residue protein sequence, read N- to C-terminus: Calcium homeostasis modulator protein 1 (348 aa).

Topologically, residues 1-20 (MDKFRMIFQFLQSNQESFMN) are cytoplasmic. The interval 9–36 (QFLQSNQESFMNGICGIMALASAQMYSA) is central pore. Residues 21 to 36 (GICGIMALASAQMYSA) traverse the membrane as a helical segment. Residues 37 to 48 (FDFNCPCLPGYN) lie on the Extracellular side of the membrane. 2 disulfide bridges follow: Cys-41/Cys-126 and Cys-43/Cys-160. A helical membrane pass occupies residues 49 to 71 (VVYSLGILLTPPLVLFLLGLVMN). The tract at residues 62-69 (VLFLLGLV) is phospholipid-binding. The Cytoplasmic segment spans residues 72 to 98 (NNISMLAEEWKRPAGRRAKDPAVLRYM). Residues 99-124 (FCSMAQRALIAPVVWVAVTLLDGKCF) traverse the membrane as a helical segment. Cys-100 carries the S-palmitoyl cysteine lipid modification. The segment at 104-116 (QRALIAPVVWVAV) is phospholipid-binding. Residues 125–179 (LCAFCTAVPVATLGNGSLVPGLPAPELARLLARVPCPEIYDGNWLLAREVAVRYL) are Extracellular-facing. N-linked (GlcNAc...) asparagine glycosylation is present at Asn-139. Residues 180 to 205 (RCISQALGWSFVLLTTLLAFVVRSVR) form a helical membrane-spanning segment. The segment at 191–201 (VLLTTLLAFVV) is phospholipid-binding. Residues 206–348 (PCFTQVAFLK…KEVATYFSKV (143 aa)) lie on the Cytoplasmic side of the membrane. Cys-207 carries the S-palmitoyl cysteine lipid modification. Positions 324 to 348 (LMSNGWAGGEPRPPRKEVATYFSKV) are disordered.

The protein belongs to the CALHM family. As to quaternary structure, oligomerizes to form hexamers and octamers. Does not form gap junctions. Associates with CALHM3 as a pore-forming subunit in a hetero-hexameric channel complex. N-glycosylated. Assembly with CALHM3 is associated with N-glycan remodeling and formation of hybrid complex- and high mannose-type glycochains. This N-glycan processing regulates channel trafficking and gating kinetics. Post-translationally, palmitoylated by ZDHHC3, ZDHHC20 and possibly ZDHHC7. Palmitoylation regulates voltage-dependent gating of the channel by shifting it toward more depolarized potentials. As to expression, specifically expressed in type II taste bud cells (at protein level). Not expressed in brain.

The protein localises to the cell membrane. Its subcellular location is the endoplasmic reticulum membrane. It localises to the basolateral cell membrane. It catalyses the reaction ATP(in) = ATP(out). It carries out the reaction Ca(2+)(in) = Ca(2+)(out). The catalysed reaction is Mg(2+)(in) = Mg(2+)(out). The enzyme catalyses Na(+)(in) = Na(+)(out). It catalyses the reaction K(+)(in) = K(+)(out). It carries out the reaction Li(+)(in) = Li(+)(out). The catalysed reaction is Rb(+)(in) = Rb(+)(out). The enzyme catalyses Cs(+)(in) = Cs(+)(out). It catalyses the reaction chloride(in) = chloride(out). Regulated by membrane voltage and extracellular Ca(2+). Inhibited by Gd(3+), ruthenium red, and Zn(2+) and partially inhibited by 2-aminoethoxydiphenyl borate. Its function is as follows. Pore-forming subunit of gustatory voltage-gated ion channels required for sensory perception of sweet, bitter and umami tastes. With CALHM3 forms a fast-activating voltage-gated ATP-release channel in type II taste bud cells, ATP acting as a neurotransmitter to activate afferent neural gustatory pathways. Acts both as a voltage-gated and calcium-activated ion channel: mediates neuronal excitability in response to membrane depolarization and low extracellular Ca(2+) concentration. Has poor ion selectivity and forms a wide pore (around 14 Angstroms) that mediates permeation of small ions including Ca(2+), Na(+), K(+) and Cl(-), as well as larger ions such as ATP(4-). Mediates Ca(2+) influx and downstream activation of the ERK1 and ERK2 cascade in neurons. Triggers endoplasmic reticulum stress by reducing the calcium content of the endoplasmic reticulum. May indirectly control amyloid precursor protein (APP) proteolysis and aggregated amyloid-beta (Abeta) peptides levels in a Ca(2+) dependent manner. This Mus musculus (Mouse) protein is Calcium homeostasis modulator protein 1.